The primary structure comprises 119 residues: DNA-binding protein MMP0157 (119 aa).

Residues 1–12 show a composition bias toward basic and acidic residues; sequence MNPEEIRQRRLQ. The segment at 1 to 35 is disordered; that stretch reads MNPEEIRQRRLQEMQAKAQAQGAANDPEAQRQMQE.

This sequence belongs to the PDCD5 family.

The chain is DNA-binding protein MMP0157 from Methanococcus maripaludis (strain DSM 14266 / JCM 13030 / NBRC 101832 / S2 / LL).